Here is a 365-residue protein sequence, read N- to C-terminus: MSIEIARIKKSFGRTQVLNDISLDIPSGQMVALLGPSGSGKTTLLRIIAGLEHQSSGHIRFHGTDVSRLHARERKVGFVFQHYALFRHMTVFDNIAFGLTVLPRRDRPTAAAIKTKVTQLLEMVQLAHLADRFPAQLSGGQKQRVALARALAVEPQILLLDEPFGALDAQVRKELRRWLRQLHEELKFTSVFVTHDQEEATEVADRVVVMSQGNIEQADAPDRVWREPATRFVLEFMGEVNRLTGTVRGGQFHVGAHRWPLGYTPAYQGPVDLFLRPWEVDISRRTSLDSPLPVQVIEASPKGHYTQLVVQPLGWYHDPLTVVMAGEDVPVRGERLFVGLQKARLYNGDQRIETREEELALAQSA.

An ABC transporter domain is found at 3-237; that stretch reads IEIARIKKSF…PATRFVLEFM (235 aa). 35-42 serves as a coordination point for ATP; the sequence is GPSGSGKT.

It belongs to the ABC transporter superfamily. Sulfate/tungstate importer (TC 3.A.1.6) family. As to quaternary structure, the complex is composed of two ATP-binding proteins (CysA), two transmembrane proteins (CysT and CysW) and a solute-binding protein (CysP).

The protein localises to the cell inner membrane. It carries out the reaction sulfate(out) + ATP + H2O = sulfate(in) + ADP + phosphate + H(+). The enzyme catalyses thiosulfate(out) + ATP + H2O = thiosulfate(in) + ADP + phosphate + H(+). In terms of biological role, part of the ABC transporter complex CysAWTP involved in sulfate/thiosulfate import. Responsible for energy coupling to the transport system. This chain is Sulfate/thiosulfate import ATP-binding protein CysA, found in Salmonella typhimurium (strain LT2 / SGSC1412 / ATCC 700720).